An 86-amino-acid polypeptide reads, in one-letter code: High affinity immunoglobulin epsilon receptor subunit gamma (86 aa).

The first 18 residues, 1–18 (MISAVILFLLLLVEQAAA), serve as a signal peptide directing secretion. Over 19–23 (LGEPQ) the chain is Extracellular. A helical transmembrane segment spans residues 24 to 44 (LCYILDAVLFLYGIVLTLLYC). Over 45-86 (RLKIQVRKAAIASREKADAVYTGLNTRSQETYETLKHEKPPQ) the chain is Cytoplasmic. Residues 54 to 82 (AIASREKADAVYTGLNTRSQETYETLKHE) form the ITAM domain. A phosphotyrosine mark is found at tyrosine 65 and tyrosine 76. Threonine 78 carries the phosphothreonine modification.

Belongs to the CD3Z/FCER1G family. IgE Fc receptor is a tetramer of an alpha chain, a beta chain, and two disulfide linked gamma chains. Associates with FCGR1A; forms a functional signaling complex. The signaling subunit of immunoglobulin gamma (IgG) Fc receptor complex. As a homodimer or a heterodimer of CD247 and FCER1G, associates with the ligand binding subunit FCGR3A to form a functional receptor complex. Associates with CLEC6A. Interacts with CLEC4E. Interacts (via ITAM domain) with SYK (via SH2 domains); activates SYK, enabling integrin-mediated activation of neutrophils and macrophages. Interacts with CSF2RB and recruits SYK in response to IL3 stimulation; this interaction is direct. Interacts with CD300LH; the interaction may be indirect. Interacts with CD300LD. Interacts with TARM1. As to expression, expressed in mast cells (at protein level). Expressed in basophils (at protein level).

It is found in the cell membrane. Its function is as follows. Adapter protein containing an immunoreceptor tyrosine-based activation motif (ITAM) that transduces activation signals from various immunoreceptors. As a component of the high-affinity immunoglobulin E (IgE) receptor, mediates allergic inflammatory signaling in mast cells. As a constitutive component of interleukin-3 receptor complex, selectively mediates interleukin 4/IL4 production by basophils, priming T-cells toward effector T-helper 2 subset. Associates with pattern recognition receptors CLEC4D and CLEC4E to form a functional signaling complex in myeloid cells. Binding of mycobacterial trehalose 6,6'-dimycolate (TDM) to this receptor complex leads to phosphorylation of ITAM, triggering activation of SYK, CARD9 and NF-kappa-B, consequently driving maturation of antigen-presenting cells and shaping antigen-specific priming of T-cells toward effector T-helper 1 and T-helper 17 cell subtypes. May function cooperatively with other activating receptors. Functionally linked to integrin beta-2/ITGB2-mediated neutrophil activation. Also involved in integrin alpha-2/ITGA2-mediated platelet activation. The sequence is that of High affinity immunoglobulin epsilon receptor subunit gamma from Mus musculus (Mouse).